Here is a 303-residue protein sequence, read N- to C-terminus: MHFLAFLLCLIPLALCIIEPRDIDGPTSHEAPTDLPIDWHILSQAAGMAHEPYCLFGDIGDRVGDAEVLWSKGHGVVIQRVKIFHSKSLGVTVSFEGTTASLLSILHDVNAALIDPPKEVAPAYCEGVKLFAGFSNAYMELRDEVYEQIVKFQKQFNDKRVTTTGHSLGAAMAVLAAMDLNKRLDDGIYRSFAFGMPRTGNGAFANDVDKKIGGRFFYIVNGRDWVPRVLPRELGFQHPSGQIWINPPSTTHWKYYPGQENHYGANSEDPILTFEDYHGIYSHICLGYGPGKCPASVGTVYLP.

Residues 1-16 form the signal peptide; it reads MHFLAFLLCLIPLALC. Cysteines 54 and 293 form a disulfide. The Nucleophile role is filled by S167. D224 is a catalytic residue.

It belongs to the AB hydrolase superfamily. Lipase family. Class 3 subfamily.

Its subcellular location is the secreted. It catalyses the reaction a monoacylglycerol + H2O = glycerol + a fatty acid + H(+). The catalysed reaction is a diacylglycerol + H2O = a monoacylglycerol + a fatty acid + H(+). Functionally, secreted lipase involved in Dandruff and seborrheic dermatitis (D/SD) probably via lipase-mediated breakdown of sebaceous lipids and release of irritating free fatty acids. Shows activity against monoglyceride and diglyceride substrates. Due to an absence of fatty acid synthase genes in Malassezia species, secretory lipases are essential for the yeast to generate free fatty acids from degradation of sebum and assimilate them as lipid sources for growth. Plays an essential role at the pathogen-host interface during disease progression. This is Secreted mono- and diacylglycerol lipase LIP4 from Malassezia restricta (strain ATCC 96810 / NBRC 103918 / CBS 7877) (Seborrheic dermatitis infection agent).